A 315-amino-acid polypeptide reads, in one-letter code: Taste receptor type 2 member 129 (315 aa).

Residues 1–9 (MDGIIQIIS) lie on the Extracellular side of the membrane. A helical membrane pass occupies residues 10–30 (AFIVIIEIIIGWFGNGFIVLV). Residues 31–46 (NCMHWIKRRRISTVNQ) are Cytoplasmic-facing. Residues 47-67 (ILTALAFSRIYLLLTVFTVIL) traverse the membrane as a helical segment. Over 68 to 101 (ASVQYSNILVTRREVKVIIFHLITSNHFSMWLAA) the chain is Extracellular. Residues 102-122 (CLGLFYFLKIANFSNFIFVFL) traverse the membrane as a helical segment. Residues 123–128 (KKRVNK) lie on the Cytoplasmic side of the membrane. The chain crosses the membrane as a helical span at residues 129 to 149 (VVSGTLLMSLVFLFLNTLLIN). The Extracellular segment spans residues 150–185 (SYIDAQIDDYRGYLLYDFTSNITVSFYRVILVINNC). The N-linked (GlcNAc...) asparagine glycan is linked to Asn-170. A helical membrane pass occupies residues 186–206 (IFTSIPFALSQSTFLMLIFSL). Residues 207-233 (WRHYKKMQQHAQRCRDTLTNAHIKVLQ) are Cytoplasmic-facing. The helical transmembrane segment at 234-254 (TMIMYVLLSAIFFLFLSMQIW) threads the bilayer. At 255 to 266 (RNKLMENILFIR) the chain is on the extracellular side. The chain crosses the membrane as a helical span at residues 267 to 287 (FCETVAAVFPSGHSCVLIWGD). Residues 288–315 (TNLRQTFLSVLWWLKHRFTLWVPKLYCR) are Cytoplasmic-facing.

The protein belongs to the G-protein coupled receptor T2R family.

The protein localises to the membrane. Its function is as follows. Putative taste receptor which may play a role in the perception of bitterness. This is Taste receptor type 2 member 129 from Rattus norvegicus (Rat).